The chain runs to 162 residues: Lipoprotein signal peptidase (162 aa).

A run of 4 helical transmembrane segments spans residues leucine 9–threonine 29, valine 39–phenylalanine 59, valine 66–tyrosine 86, and valine 95–phenylalanine 115. Active-site residues include aspartate 122 and aspartate 140. Residues phenylalanine 136 to phenylalanine 156 form a helical membrane-spanning segment.

Belongs to the peptidase A8 family.

It localises to the cell inner membrane. It carries out the reaction Release of signal peptides from bacterial membrane prolipoproteins. Hydrolyzes -Xaa-Yaa-Zaa-|-(S,diacylglyceryl)Cys-, in which Xaa is hydrophobic (preferably Leu), and Yaa (Ala or Ser) and Zaa (Gly or Ala) have small, neutral side chains.. It participates in protein modification; lipoprotein biosynthesis (signal peptide cleavage). Its function is as follows. This protein specifically catalyzes the removal of signal peptides from prolipoproteins. This is Lipoprotein signal peptidase from Desulforapulum autotrophicum (strain ATCC 43914 / DSM 3382 / VKM B-1955 / HRM2) (Desulfobacterium autotrophicum).